A 274-amino-acid polypeptide reads, in one-letter code: TATA box-binding protein-associated factor RNA polymerase I subunit D (274 aa).

Residues 1–19 (MDSLNYTTACDSAVETENQ) show a composition bias toward polar residues. Disordered stretches follow at residues 1–45 (MDSL…RQRN) and 84–111 (NKKRKRKKKKYKPTGRSVGRPKGRRTTR). Ser20 is subject to Phosphoserine. Residues 84 to 110 (NKKRKRKKKKYKPTGRSVGRPKGRRTT) show a composition bias toward basic residues. Phosphoserine is present on residues Ser132 and Ser229.

As to quaternary structure, component of the transcription factor SL1/TIF-IB complex, composed of TBP and at least TAF1A, TAF1B, TAF1C and TAF1D. Interacts with UBTF.

The protein localises to the nucleus. Component of the transcription factor SL1/TIF-IB complex, which is involved in the assembly of the PIC (preinitiation complex) during RNA polymerase I-dependent transcription. The rate of PIC formation probably is primarily dependent on the rate of association of SL1/TIF-IB with the rDNA promoter. SL1/TIF-IB is involved in stabilization of nucleolar transcription factor 1/UBTF on rDNA. Formation of SL1/TIF-IB excludes the association of TBP with TFIID subunits. The chain is TATA box-binding protein-associated factor RNA polymerase I subunit D (TAF1D) from Bos taurus (Bovine).